Consider the following 610-residue polypeptide: UvrABC system protein C (610 aa).

In terms of domain architecture, GIY-YIG spans 16–94 (SQPGVYRMYD…IKLYQPRYNV (79 aa)). Residues 204–239 (DQVLTQLIARMEKASQDLAFEEAARIRDQIQAVRRV) form the UVR domain.

This sequence belongs to the UvrC family. As to quaternary structure, interacts with UvrB in an incision complex.

It is found in the cytoplasm. The UvrABC repair system catalyzes the recognition and processing of DNA lesions. UvrC both incises the 5' and 3' sides of the lesion. The N-terminal half is responsible for the 3' incision and the C-terminal half is responsible for the 5' incision. The protein is UvrABC system protein C of Salmonella heidelberg (strain SL476).